The following is an 843-amino-acid chain: Translation initiation factor IF-2 (843 aa).

Disordered regions lie at residues 50–72 (LKSS…KTTS) and 94–260 (QRSP…TGPV). The segment covering 96-135 (SPEEIQAEQKREQDERRAAENAARDKVDADVRQRNEEQAR) has biased composition (basic and acidic residues). Over residues 139-173 (TATAAAAPAAKAEPAPAAAAPAPAPVVADAPASED) the composition is skewed to low complexity. 2 stretches are compositionally biased toward basic and acidic residues: residues 174-203 (AAAR…RGEA) and 227-236 (TTDEESDGAR). The segment covering 237 to 250 (RGRGGKGKLKKRNQ) has biased composition (basic residues). Residues 343–516 (SRAPVVTVMG…EVLELTATPT (174 aa)) form the tr-type G domain. Positions 352 to 359 (GHVDHGKT) are G1. Residue 352-359 (GHVDHGKT) participates in GTP binding. Residues 377 to 381 (GITQH) form a G2 region. A G3 region spans residues 398–401 (DTPG). GTP contacts are provided by residues 398–402 (DTPGH) and 452–455 (NKID). The segment at 452–455 (NKID) is G4. The G5 stretch occupies residues 488–490 (SAK).

It belongs to the TRAFAC class translation factor GTPase superfamily. Classic translation factor GTPase family. IF-2 subfamily.

Its subcellular location is the cytoplasm. Its function is as follows. One of the essential components for the initiation of protein synthesis. Protects formylmethionyl-tRNA from spontaneous hydrolysis and promotes its binding to the 30S ribosomal subunits. Also involved in the hydrolysis of GTP during the formation of the 70S ribosomal complex. In Pseudomonas putida (strain W619), this protein is Translation initiation factor IF-2.